Consider the following 434-residue polypeptide: Quinolone resistance transporter (434 aa).

Transmembrane regions (helical) follow at residues 15–35 (LIPALVILYLVAYIDRAAVGF), 45–65 (GIGDAAYGLGAGLFFIGYFLF), 85–105 (ILLTWGLITMAMALIQGPKSF), 110–130 (FLLGVAEAGFFPGVLYLITQW), 142–162 (MFVLSQPIAMMIAGPLAGLLL), 175–195 (WLFVAVGLPAVLLALPTFLWL), 241–261 (VLLLALYYLPVTLSIYGLNLW), 275–295 (IQIGFLSSIPYIFGIIGLLII), 306–326 (YGHLSFLYALGACAMFLSGWL), 333–353 (LAALAVVAFCLFSSTAVFWTL), 367–387 (IALINSVGNLGGYVGPFGIGL), and 396–416 (AAGLYFLSIVMLFGLILTYIV).

Belongs to the major facilitator superfamily.

The protein localises to the cell inner membrane. Functionally, efflux pump that mediates resistance to quinolone-type antibiotics. This chain is Quinolone resistance transporter, found in Acinetobacter baumannii.